The primary structure comprises 514 residues: 2,3-bisphosphoglycerate-independent phosphoglycerate mutase (514 aa).

Mn(2+) contacts are provided by Asp13 and Ser69. The active-site Phosphoserine intermediate is the Ser69. Substrate-binding positions include His128, 158-159 (RD), Arg189, Arg195, 263-266 (RADR), and Lys336. Mn(2+) contacts are provided by Asp402, His406, Asp443, His444, and His461.

It belongs to the BPG-independent phosphoglycerate mutase family. In terms of assembly, monomer. Requires Mn(2+) as cofactor.

It carries out the reaction (2R)-2-phosphoglycerate = (2R)-3-phosphoglycerate. The protein operates within carbohydrate degradation; glycolysis; pyruvate from D-glyceraldehyde 3-phosphate: step 3/5. In terms of biological role, catalyzes the interconversion of 2-phosphoglycerate and 3-phosphoglycerate. The sequence is that of 2,3-bisphosphoglycerate-independent phosphoglycerate mutase from Akkermansia muciniphila (strain ATCC BAA-835 / DSM 22959 / JCM 33894 / BCRC 81048 / CCUG 64013 / CIP 107961 / Muc).